Consider the following 841-residue polypeptide: pre-rRNA 2'-O-ribose RNA methyltransferase FTSJ3 (841 aa).

Positions 56, 58, 76, 92, and 117 each coordinate S-adenosyl-L-methionine. Lys157 acts as the Proton acceptor in catalysis. Positions 332–366 are disordered; it reads ISLSSGEEDEGNEEDSTAGTTEQPSKEEEEEEQLN. Residues Ser333, Ser335, Ser336, Ser347, and Ser356 each carry the phosphoserine modification. Residues 337–347 show a composition bias toward acidic residues; sequence GEEDEGNEEDS. The stretch at 356–404 forms a coiled coil; that stretch reads SKEEEEEEQLNQTLAEMKAQEVAELKRKKKKLLREQRKQRERVELKMDL. Lys357 participates in a covalent cross-link: Glycyl lysine isopeptide (Lys-Gly) (interchain with G-Cter in SUMO2). Arg389 carries the citrulline modification. A disordered region spans residues 454–482; sequence VSDVEDDGDDTSLDSDLDPEELAGVRGHQ. Over residues 456-474 the composition is skewed to acidic residues; sequence DVEDDGDDTSLDSDLDPEE. A Phosphoserine modification is found at Ser547. Thr567 is modified (phosphothreonine). Lys573 participates in a covalent cross-link: Glycyl lysine isopeptide (Lys-Gly) (interchain with G-Cter in SUMO2). Ser578 carries the post-translational modification Phosphoserine. A disordered region spans residues 579–654; it reads PLYQDEAPKG…IVPIEDPAKH (76 aa). Residue Lys637 forms a Glycyl lysine isopeptide (Lys-Gly) (interchain with G-Cter in SUMO2) linkage. Ser638 bears the Phosphoserine mark. Residue Lys653 forms a Glycyl lysine isopeptide (Lys-Gly) (interchain with G-Cter in SUMO2) linkage. Ser670 bears the Phosphoserine mark. Residue Lys672 forms a Glycyl lysine isopeptide (Lys-Gly) (interchain with G-Cter in SUMO2) linkage. Ser682 bears the Phosphoserine mark. Residue Lys704 forms a Glycyl lysine isopeptide (Lys-Gly) (interchain with G-Cter in SUMO2) linkage. A coiled-coil region spans residues 733–771; sequence IKKVAEAKARKKRRMLKRLEQTRKKAEAVVNTVDISERE. Position 777 is a citrulline (Arg777). Positions 805–815 are enriched in basic residues; that stretch reads VRRPAGVRGHF. A disordered region spans residues 805 to 841; that stretch reads VRRPAGVRGHFKVVDSRMKKDQRAQQRKEQKKKHKRK. A compositionally biased stretch (basic and acidic residues) spans 816–832; it reads KVVDSRMKKDQRAQQRK.

The protein belongs to the class I-like SAM-binding methyltransferase superfamily. RNA methyltransferase RlmE family. SPB1 subfamily. In terms of assembly, interacts with NIP7. Citrullinated by PADI4.

Its subcellular location is the nucleus. The protein localises to the nucleolus. It carries out the reaction a ribonucleotide in rRNA + S-adenosyl-L-methionine = a 2'-O-methylribonucleotide in rRNA + S-adenosyl-L-homocysteine + H(+). In terms of biological role, RNA 2'-O-methyltransferase involved in the processing of the 34S pre-rRNA to 18S rRNA and in 40S ribosomal subunit formation. The polypeptide is pre-rRNA 2'-O-ribose RNA methyltransferase FTSJ3 (Pongo abelii (Sumatran orangutan)).